A 193-amino-acid chain; its full sequence is Thymidine kinase (193 aa).

ATP-binding positions include 14–21 (GCMFSGKT) and 87–90 (DELH). The active-site Proton acceptor is Glu88. Zn(2+) is bound by residues Cys147, Cys150, Cys185, and Cys188.

It belongs to the thymidine kinase family. In terms of assembly, homotetramer.

It is found in the cytoplasm. It catalyses the reaction thymidine + ATP = dTMP + ADP + H(+). The polypeptide is Thymidine kinase (Roseiflexus sp. (strain RS-1)).